A 534-amino-acid polypeptide reads, in one-letter code: Cytochrome P450 monooxygenase ascG (534 aa).

A helical membrane pass occupies residues 13-33; that stretch reads FVASFPALSAAAGLIVAISFI. Residue asparagine 466 is glycosylated (N-linked (GlcNAc...) asparagine). Cysteine 469 serves as a coordination point for heme.

It belongs to the cytochrome P450 family. Heme is required as a cofactor.

The protein localises to the membrane. It catalyses the reaction ilicicolin C + NADPH + O2 + H(+) = ascochlorin + NADP(+) + 2 H2O. It participates in secondary metabolite biosynthesis; terpenoid biosynthesis. Cytochrome P450 monooxygenase; part of the asc-1 gene cluster that mediates the biosynthesis of both ascochlorin and ascofuranone, a strong inhibitor of cyanide-insensitive alternative oxidases and a promising drug candidate against African trypanosomiasis. The first step in the pathway is performed by the non-reducing polyketide synthase ascC that produces orsellinic acid by condensing acetyl-CoA with 3 malonyl-CoA units. Orsellinic acid is then prenylated by the prenyltransferase ascA to yield ilicicolinic acid B. Ilicicolinic acid B is further reduced to ilicicolin B by the reductase ascB. The halogenase ascD then chlorinates ilicicolin B to produce ilicicolin A which is converted to ilicicolin A epoxide by the cytochrome P450 monooxygenase ascE that catalyzes stereoselective epoxidation of the terminal double bond of the prenyl group. Ilicicolin A epoxide is the last common precursor for the biosynthesis of ascofuranone and ascochlorin. The terpene cyclase ascF produces a monocyclic terpene, and the cyclization reaction is proposed to be initiated by protonation of the terminal epoxide of ilicicolin A epoxide to generate a monocyclic tertiarycation, which is followed by a series of hydride and methyl shifts with abstraction of proton, leading to the formation of the (14S,15R,19R)-trimethylcyclohexanone ring structure of ilicicolin C, which is finally reduced to ascochlorin by the dehydrogenase ascG. On the other hand, ilicicolin A epoxide is hydroxylated by the cytochrome P450 monooxygenase ascH, and the resultant product is cyclized by the terpene cyclase ascI to ascofuranol via protonation-initiated epoxide ring opening, which facilitates the 6-endo-tet cyclization to form the tetrahy-drofuran ring. Finally, ascofuranol is oxidized into ascofuranone by ascJ. The sequence is that of Cytochrome P450 monooxygenase ascG from Acremonium egyptiacum (Oospora egyptiaca).